We begin with the raw amino-acid sequence, 609 residues long: Ataxin-10 homolog (609 aa).

Disordered stretches follow at residues 265 to 293 (KSTT…TTTG), 405 to 426 (KQQE…SKDS), and 461 to 490 (SDTN…KGFN). The segment covering 266–292 (STTESTTESTTTESTDSTTDSTTTTTT) has biased composition (low complexity). Low complexity predominate over residues 466–479 (SSSSSSSSSSSTTT). A compositionally biased stretch (polar residues) spans 480-490 (DGETVTSKGFN).

The protein belongs to the ATXN10 family.

Functionally, may play a role in the regulation of cytokinesis. The polypeptide is Ataxin-10 homolog (atxn10) (Dictyostelium discoideum (Social amoeba)).